An 855-amino-acid polypeptide reads, in one-letter code: MNNNLFEGSDDDGEDLQLSTNKDYAKTYNILRKKELLQKYKDRGLDVSESEFDSDSSSSEEDEVDPKFDQDFFKTLSSLKSKDPCIYDKGTKFFSESSGDEDDKDGEAPKKKKKAKPVTLKDYERKVILEHNGKFESSDEEQQEKEHEELQRAQSPSAVEEERRLKAEFRKVMNKEDDSEDEEFGGIFKKRSKTKEQTAAEEADFAKWLAGKQAEIQETDKKQLEPLKQYWSSNKLTQGESFLRDYILNKGYANTDESAIPTYDEIVGEAAPLSEDEQELEKQAEFEHKYNFRFEEPDADFIKRYPRTIEQSLRRTDDKRKEKRKELKERKDQEKQQKMKELELVKEMKRKEIDEKIRKLKAVTGNDELGFRDEELEEDFDPAAHDRRMQELFDDEYYNVDEGEEKPECPSDIDELVLEDWDNYDPRQHANGGGEDYEGHCEDDDFNMDCDYDPSTAKEQLQQELIENTRGRKGRKGRRNRFMEMIQAEKPAFNPEDEKTYSEYIDEYYQMDCEDIIGDQPCRFKYVETTPNDFGLTIEEILLAKNKELNQWASLKKAVQNRPEHVEKKEQRLYKMKAKNEDLKRKIFKSLYGEGSDDEEQPAEEKPEVTPAEATAPAENGQVSTEGLSKSKRKRLKRKAAAAAASAPKVLKEESDSKDPKEADGSTEDVQAESSKKKVDTPSKKGKDDANQETKNSPQSTEKTKNNNALKNNKKEPKNVQNGFQKPQNQANKSAKTKSNQPFKTTESAPAKAEKSNGNNPFNKPQSKSQQRQELPPIHKNQGGNKKGPRNANGTNPFKKSNQKPSAPFPAKKTNNFKAKNKQNNNSGITDDRLKAYGINPRKFHKREKYGKKDN.

Disordered regions lie at residues valine 47–lysine 67, lysine 82–proline 117, glutamate 130–glutamate 196, serine 312–leucine 342, tyrosine 424–aspartate 453, and lysine 589–asparagine 855. The segment covering serine 48–valine 64 has biased composition (acidic residues). The segment covering lysine 82–threonine 91 has biased composition (basic and acidic residues). Residues serine 95, serine 97, serine 98, serine 137, and serine 138 each carry the phosphoserine modification. Over residues glutamate 160–glutamate 176 the composition is skewed to basic and acidic residues. Serine 179 carries the post-translational modification Phosphoserine. Residues arginine 307 to alanine 362 are a coiled coil. Residues cysteine 441–tyrosine 452 are compositionally biased toward acidic residues. Positions valine 609–glutamate 619 are enriched in low complexity. The span at lysine 630 to alanine 640 shows a compositional bias: basic residues. Basic and acidic residues-rich tracts occupy residues valine 650 to aspartate 664 and serine 674 to glutamine 692. 3 stretches are compositionally biased toward polar residues: residues valine 720–serine 748, serine 756–glutamine 773, and alanine 792–proline 805. Over residues lysine 812–asparagine 826 the composition is skewed to low complexity. Over residues arginine 842–asparagine 855 the composition is skewed to basic residues.

Belongs to the KRI1 family.

The chain is Protein KRI1 homolog from Drosophila melanogaster (Fruit fly).